The chain runs to 207 residues: Large ribosomal subunit protein uL4 (207 aa).

The interval 48 to 70 (KAQKTRSEVSGGGAKPWRQKGTG) is disordered.

It belongs to the universal ribosomal protein uL4 family. As to quaternary structure, part of the 50S ribosomal subunit.

One of the primary rRNA binding proteins, this protein initially binds near the 5'-end of the 23S rRNA. It is important during the early stages of 50S assembly. It makes multiple contacts with different domains of the 23S rRNA in the assembled 50S subunit and ribosome. Its function is as follows. Forms part of the polypeptide exit tunnel. This Francisella tularensis subsp. holarctica (strain FTNF002-00 / FTA) protein is Large ribosomal subunit protein uL4.